The primary structure comprises 292 residues: Protein/nucleic acid deglycase HchA (292 aa).

Residues 1–12 (MSQDVNKLSKQP) show a composition bias toward polar residues. The interval 1 to 23 (MSQDVNKLSKQPTPDKAEDNAFF) is disordered. Catalysis depends on Cys190, which acts as the Nucleophile.

The protein belongs to the peptidase C56 family. HchA subfamily.

It is found in the cytoplasm. It catalyses the reaction N(omega)-(1-hydroxy-2-oxopropyl)-L-arginyl-[protein] + H2O = lactate + L-arginyl-[protein] + H(+). The enzyme catalyses N(6)-(1-hydroxy-2-oxopropyl)-L-lysyl-[protein] + H2O = lactate + L-lysyl-[protein] + H(+). The catalysed reaction is S-(1-hydroxy-2-oxopropyl)-L-cysteinyl-[protein] + H2O = lactate + L-cysteinyl-[protein] + H(+). It carries out the reaction N(omega)-(1-hydroxy-2-oxoethyl)-L-arginyl-[protein] + H2O = L-arginyl-[protein] + glycolate + H(+). It catalyses the reaction N(6)-(1-hydroxy-2-oxoethyl)-L-lysyl-[protein] + H2O = glycolate + L-lysyl-[protein] + H(+). The enzyme catalyses S-(1-hydroxy-2-oxoethyl)-L-cysteinyl-[protein] + H2O = glycolate + L-cysteinyl-[protein] + H(+). The catalysed reaction is N(2)-(1-hydroxy-2-oxopropyl)-dGTP + H2O = lactate + dGTP + H(+). It carries out the reaction N(2)-(1-hydroxy-2-oxopropyl)-GTP + H2O = lactate + GTP + H(+). It catalyses the reaction N(2)-(1-hydroxy-2-oxopropyl)-GDP + H2O = lactate + GDP + H(+). The enzyme catalyses N(2)-(1-hydroxy-2-oxopropyl)-GMP + H2O = lactate + GMP + H(+). The catalysed reaction is N(2)-(1-hydroxy-2-oxoethyl)-dGTP + H2O = dGTP + glycolate + H(+). It carries out the reaction N(2)-(1-hydroxy-2-oxoethyl)-GTP + H2O = glycolate + GTP + H(+). It catalyses the reaction N(2)-(1-hydroxy-2-oxoethyl)-GDP + H2O = glycolate + GDP + H(+). The enzyme catalyses N(2)-(1-hydroxy-2-oxoethyl)-GMP + H2O = glycolate + GMP + H(+). The catalysed reaction is an N(2)-(1-hydroxy-2-oxopropyl)-guanosine in RNA + H2O = a guanosine in RNA + lactate + H(+). It carries out the reaction an N(2)-(1-hydroxy-2-oxopropyl)-2'-deoxyguanosine in DNA + H2O = a 2'-deoxyguanosine in DNA + lactate + H(+). It catalyses the reaction an N(2)-(1-hydroxy-2-oxoethyl)-guanosine in RNA + H2O = a guanosine in RNA + glycolate + H(+). The enzyme catalyses an N(2)-(1-hydroxy-2-oxoethyl)-2'-deoxyguanosine in DNA + H2O = a 2'-deoxyguanosine in DNA + glycolate + H(+). Its function is as follows. Protein and nucleotide deglycase that catalyzes the deglycation of the Maillard adducts formed between amino groups of proteins or nucleotides and reactive carbonyl groups of glyoxals. Thus, functions as a protein deglycase that repairs methylglyoxal- and glyoxal-glycated proteins, and releases repaired proteins and lactate or glycolate, respectively. Deglycates cysteine, arginine and lysine residues in proteins, and thus reactivates these proteins by reversing glycation by glyoxals. Acts on early glycation intermediates (hemithioacetals and aminocarbinols), preventing the formation of Schiff bases and advanced glycation endproducts (AGE). Also functions as a nucleotide deglycase able to repair glycated guanine in the free nucleotide pool (GTP, GDP, GMP, dGTP) and in DNA and RNA. Is thus involved in a major nucleotide repair system named guanine glycation repair (GG repair), dedicated to reversing methylglyoxal and glyoxal damage via nucleotide sanitization and direct nucleic acid repair. Plays an important role in protecting cells from carbonyl stress. The protein is Protein/nucleic acid deglycase HchA of Staphylococcus aureus (strain MRSA252).